The chain runs to 351 residues: Polyribonucleotide 5'-hydroxyl-kinase TK1956 (351 aa).

Residue 34–41 participates in ATP binding; that stretch reads GGVDSGKS.

Requires a divalent metal cation as cofactor.

The enzyme catalyses a 5'-end dephospho-2'-deoxyribonucleoside-DNA + ATP = a 5'-end 5'-phospho-2'-deoxyribonucleoside-DNA + ADP + H(+). The catalysed reaction is a 5'-end dephospho-ribonucleoside-RNA + ATP = a 5'-end 5'-phospho-ribonucleoside-RNA + ADP + H(+). In terms of biological role, polynucleotide kinase that can phosphorylate the 5'-hydroxyl groups of both single-stranded RNA (ssRNA) and single-stranded DNA (ssDNA). Exhibits a strong preference for ssRNA. The polypeptide is Polyribonucleotide 5'-hydroxyl-kinase TK1956 (Thermococcus kodakarensis (strain ATCC BAA-918 / JCM 12380 / KOD1) (Pyrococcus kodakaraensis (strain KOD1))).